The chain runs to 407 residues: Multifunctional CCA protein (407 aa).

ATP is bound by residues Gly-8 and Arg-11. Positions 8 and 11 each coordinate CTP. Mg(2+)-binding residues include Asp-21 and Asp-23. ATP is bound by residues Arg-91, Arg-137, and Arg-140. Arg-91, Arg-137, and Arg-140 together coordinate CTP. In terms of domain architecture, HD spans 228-329 (SGIHTLMVAQ…IKIFDKMDVW (102 aa)).

The protein belongs to the tRNA nucleotidyltransferase/poly(A) polymerase family. Bacterial CCA-adding enzyme type 1 subfamily. Monomer. Can also form homodimers and oligomers. Mg(2+) serves as cofactor. Requires Ni(2+) as cofactor.

The catalysed reaction is a tRNA precursor + 2 CTP + ATP = a tRNA with a 3' CCA end + 3 diphosphate. It carries out the reaction a tRNA with a 3' CCA end + 2 CTP + ATP = a tRNA with a 3' CCACCA end + 3 diphosphate. Functionally, catalyzes the addition and repair of the essential 3'-terminal CCA sequence in tRNAs without using a nucleic acid template. Adds these three nucleotides in the order of C, C, and A to the tRNA nucleotide-73, using CTP and ATP as substrates and producing inorganic pyrophosphate. tRNA 3'-terminal CCA addition is required both for tRNA processing and repair. Also involved in tRNA surveillance by mediating tandem CCA addition to generate a CCACCA at the 3' terminus of unstable tRNAs. While stable tRNAs receive only 3'-terminal CCA, unstable tRNAs are marked with CCACCA and rapidly degraded. The sequence is that of Multifunctional CCA protein from Aliivibrio fischeri (strain MJ11) (Vibrio fischeri).